The chain runs to 429 residues: Ribosomal RNA small subunit methyltransferase B (429 aa).

S-adenosyl-L-methionine contacts are provided by residues 254–260, D277, D303, and D322; that span reads CAAPGGK. Catalysis depends on C375, which acts as the Nucleophile. The segment at 397–419 is disordered; the sequence is ALSETGTPDQPGQQNLPGGEEGD. The span at 400–412 shows a compositional bias: polar residues; that stretch reads ETGTPDQPGQQNL.

This sequence belongs to the class I-like SAM-binding methyltransferase superfamily. RsmB/NOP family.

The protein localises to the cytoplasm. The enzyme catalyses cytidine(967) in 16S rRNA + S-adenosyl-L-methionine = 5-methylcytidine(967) in 16S rRNA + S-adenosyl-L-homocysteine + H(+). Functionally, specifically methylates the cytosine at position 967 (m5C967) of 16S rRNA. This Salmonella paratyphi B (strain ATCC BAA-1250 / SPB7) protein is Ribosomal RNA small subunit methyltransferase B.